A 166-amino-acid polypeptide reads, in one-letter code: Putative 4-hydroxy-4-methyl-2-oxoglutarate aldolase (166 aa).

Substrate contacts are provided by residues 74–77 (GDQI) and R96. D97 is a binding site for a divalent metal cation.

It belongs to the class II aldolase/RraA-like family. In terms of assembly, homotrimer. Requires a divalent metal cation as cofactor.

It catalyses the reaction 4-hydroxy-4-methyl-2-oxoglutarate = 2 pyruvate. The enzyme catalyses oxaloacetate + H(+) = pyruvate + CO2. Functionally, catalyzes the aldol cleavage of 4-hydroxy-4-methyl-2-oxoglutarate (HMG) into 2 molecules of pyruvate. Also contains a secondary oxaloacetate (OAA) decarboxylase activity due to the common pyruvate enolate transition state formed following C-C bond cleavage in the retro-aldol and decarboxylation reactions. The polypeptide is Putative 4-hydroxy-4-methyl-2-oxoglutarate aldolase (Xanthomonas oryzae pv. oryzae (strain MAFF 311018)).